A 394-amino-acid polypeptide reads, in one-letter code: Elongation factor Tu (394 aa).

Residues 10-204 enclose the tr-type G domain; that stretch reads KEHVNVGTIG…AVDTYIENPV (195 aa). The interval 19–26 is G1; that stretch reads GHVDHGKT. Position 19-26 (19-26) interacts with GTP; that stretch reads GHVDHGKT. Threonine 26 contributes to the Mg(2+) binding site. The tract at residues 60–64 is G2; it reads GITIN. The tract at residues 81–84 is G3; sequence DCPG. GTP-binding positions include 81 to 85 and 136 to 139; these read DCPGH and NKCD. The tract at residues 136–139 is G4; the sequence is NKCD. Positions 174 to 176 are G5; it reads SAL.

The protein belongs to the TRAFAC class translation factor GTPase superfamily. Classic translation factor GTPase family. EF-Tu/EF-1A subfamily. Monomer.

It is found in the cytoplasm. It carries out the reaction GTP + H2O = GDP + phosphate + H(+). Its function is as follows. GTP hydrolase that promotes the GTP-dependent binding of aminoacyl-tRNA to the A-site of ribosomes during protein biosynthesis. The protein is Elongation factor Tu of Mycoplasmopsis synoviae (strain 53) (Mycoplasma synoviae).